We begin with the raw amino-acid sequence, 228 residues long: Hematopoietically-expressed homeobox protein hhex (228 aa).

A DNA-binding region (homeobox) is located at residues 117–176 (RKGGQVRFSNDQTIELEKKFETQKYLSPPERKRLAKMLQLSERQVKTWFQNRRAKWRRLK). Residues 175-228 (LKQENPPSTGKREAEDSDTRRLSDAAARARELESGASTDSEELLDIEDEHQFTL) are disordered. A compositionally biased stretch (basic and acidic residues) spans 184–207 (GKREAEDSDTRRLSDAAARARELE). The span at 213–222 (DSEELLDIED) shows a compositional bias: acidic residues.

Expressed in embryonic endothelial and blood lineages. From late-blastula stage, expression is restricted to the dorsal marginal region of the extraembryonic yolk syncytial layer (YSL). By the onset of gastrulation, expressed in the entire dorsal half of the YSL. Post-gastrulation, expression appears in both anterior and posterior lateral plate mesoderm by the 3-somite stage. Posteriorly, expression is in the intermediate cell mass (ICM), which contains both endothelial and blood precursors. Subsequently expressed in the developing endothelial cells including the endocardium until the onset of circulation (24 hpf) and disappears completely by 30 hpf, at which point expression is seen in the thyroid and liver primordia. Also expressed in the developing biliary tree and pancreas.

The protein resides in the nucleus. Functionally, recognizes the DNA sequence 5'-ATTAA-3'. Transcriptional repressor. Regulates the differentiation of both endothelial and blood cells. Plays a role in embryonic dorsoventral patterning by regulating bmp expression. May establish anterior identity. Functions in the embryo to regulate liver development. Functions extraembryonically to generate organ chirality. This is Hematopoietically-expressed homeobox protein hhex from Danio rerio (Zebrafish).